The following is an 80-amino-acid chain: Cytochrome c-553 (80 aa).

4 residues coordinate heme c: Cys13, Cys16, His17, and Met58.

Binds 1 heme c group covalently per subunit.

Its subcellular location is the periplasm. Functionally, natural electron acceptor for a formate dehydrogenase. The polypeptide is Cytochrome c-553 (Desulfomicrobium norvegicum (strain DSM 1741 / NCIMB 8310) (Desulfovibrio baculatus (strain Norway 4))).